The chain runs to 179 residues: MARLQEFYKEKVVPGLIEKFGYKSVMEVPRITKITLNMGLGEAVADKKIIENAVGDLTKIAGQKPVVTKARKAIAGFKIRQGYPIGAMVTLRGRAMYEFLDRLVTVALPRVRDFRGVSGRAFDGRGNYNIGVKEQIIFPEIDYDKIDALRGLNISITTTAKTDDEAKALLASFKFPFRN.

This sequence belongs to the universal ribosomal protein uL5 family. As to quaternary structure, part of the 50S ribosomal subunit; part of the 5S rRNA/L5/L18/L25 subcomplex. Contacts the 5S rRNA and the P site tRNA. Forms a bridge to the 30S subunit in the 70S ribosome.

In terms of biological role, this is one of the proteins that bind and probably mediate the attachment of the 5S RNA into the large ribosomal subunit, where it forms part of the central protuberance. In the 70S ribosome it contacts protein S13 of the 30S subunit (bridge B1b), connecting the 2 subunits; this bridge is implicated in subunit movement. Contacts the P site tRNA; the 5S rRNA and some of its associated proteins might help stabilize positioning of ribosome-bound tRNAs. In Burkholderia multivorans (strain ATCC 17616 / 249), this protein is Large ribosomal subunit protein uL5.